Here is a 446-residue protein sequence, read N- to C-terminus: Phosphoglucosamine mutase (446 aa).

Ser-99 (phosphoserine intermediate) is an active-site residue. Residues Ser-99, Asp-242, Asp-244, and Asp-246 each contribute to the Mg(2+) site. Position 99 is a phosphoserine (Ser-99).

It belongs to the phosphohexose mutase family. Mg(2+) serves as cofactor. Post-translationally, activated by phosphorylation.

It carries out the reaction alpha-D-glucosamine 1-phosphate = D-glucosamine 6-phosphate. In terms of biological role, catalyzes the conversion of glucosamine-6-phosphate to glucosamine-1-phosphate. In Wolinella succinogenes (strain ATCC 29543 / DSM 1740 / CCUG 13145 / JCM 31913 / LMG 7466 / NCTC 11488 / FDC 602W) (Vibrio succinogenes), this protein is Phosphoglucosamine mutase.